A 267-amino-acid polypeptide reads, in one-letter code: Corrinoid adenosyltransferase EutT (267 aa).

2 residues coordinate a divalent metal cation: Cys80 and Cys83.

It belongs to the Cob(I)alamin adenosyltransferase family. EutT subfamily. As to quaternary structure, homodimer. A divalent metal cation is required as a cofactor.

It localises to the bacterial microcompartment. It carries out the reaction 2 cob(II)alamin + reduced [electron-transfer flavoprotein] + 2 ATP + 2 H2O = 2 adenosylcob(III)alamin + oxidized [electron-transfer flavoprotein] + 2 phosphate + 2 diphosphate + 3 H(+). The enzyme catalyses 2 cob(II)inamide + reduced [electron-transfer flavoprotein] + 2 ATP + 2 H2O = 2 adenosylcob(III)inamide + oxidized [electron-transfer flavoprotein] + 2 phosphate + 2 diphosphate + 3 H(+). It functions in the pathway amine and polyamine degradation; ethanolamine degradation. In terms of biological role, converts cyanocobalamin (CN-B12) to adenosylcobalamin (AdoCbl), the inducer of the eut operon. Is not active on cobinamide nor other intermediates in the adenosylcobalamin synthetic pathway. Allows full induction of the eut operon. Can use ADP, CTP and dATP in place of ATP, and cobinamide in place of cobalamin, none are as efficiently used as ATP and cobalamin. Its function is as follows. Expression of the eut operon allows this bacteria to use ethanolamine (EA) as a carbon, nitrogen and energy source. It relies on cobalamin (vitamin B12) both as a cofactor for the ethanolamine ammonia-lyase (EAL) activity and to induce the operon. EA enhances bacterial survival in macrophages in a concentration-dependent manner, suggesting it is an important nutrient during infection. This is Corrinoid adenosyltransferase EutT from Salmonella typhimurium (strain LT2 / SGSC1412 / ATCC 700720).